The following is a 173-amino-acid chain: 3-isopropylmalate dehydratase small subunit (173 aa).

It belongs to the LeuD family. LeuD type 2 subfamily. As to quaternary structure, heterodimer of LeuC and LeuD.

The enzyme catalyses (2R,3S)-3-isopropylmalate = (2S)-2-isopropylmalate. It functions in the pathway amino-acid biosynthesis; L-leucine biosynthesis; L-leucine from 3-methyl-2-oxobutanoate: step 2/4. Functionally, catalyzes the isomerization between 2-isopropylmalate and 3-isopropylmalate, via the formation of 2-isopropylmaleate. This chain is 3-isopropylmalate dehydratase small subunit, found in Caldicellulosiruptor saccharolyticus (strain ATCC 43494 / DSM 8903 / Tp8T 6331).